A 220-amino-acid polypeptide reads, in one-letter code: Nucleolar protein 3 (220 aa).

Gly-2 carries N-myristoyl glycine lipidation. In terms of domain architecture, CARD spans 4 to 95; the sequence is VQERPSETID…MPDPAWDWQH (92 aa). Residues 20 to 70 form an essential for interaction with BAX region; that stretch reads VETLQADSGLLLDALVARGVLTGPEYEALDALPDAERRVRRLLLLVQSKGE. The tract at residues 111–220 is disordered; sequence GHWTPEAPSS…FQEEDESEDS (110 aa). The residue at position 149 (Thr-149) is a Phosphothreonine; by CK2. The segment covering 152–220 has biased composition (acidic residues); sequence EPELEAEATE…FQEEDESEDS (69 aa).

As to quaternary structure, oligomerizes (via CARD doamin). Interacts (via CARD domain) with CASP2; inhibits CASP2 activity in a phosphorylation-dependent manner. Interacts with CASP8; decreases CASP8 activity in a mitochondria localization- and phosphorylation-dependent manner and this interaction is dissociated by calcium. Interacts with TFPT; translocates NOL3 into the nucleus and negatively regulated TFPT-induced cell death. Interacts directly (via CARD domain) with FAS and FADD (via DED domain); inhibits death-inducing signaling complex (DISC) assembly by inhibiting the increase in FAS-FADD binding induced by FAS activation. Interacts (via CARD domain) with BAX (via a C-terminal 33 residues); inhibits BAX activation and translocation and consequently cytochrome c release from mitochondria. Interacts with PPM1G; may dephosphorylate NOL3. Interacts (via CARD domain) with BBC3 (via BH3 domain); preventing the association of BBC3 with BCL2 and resulting in activation of CASP8. Interacts (via CARD domain) with BAD(via BH3 domain); preventing the association of BAD with BCL2. Interacts directly (via CARD domain) with TNFRSF1A; inhibits TNF-signaling pathway. Post-translationally, phosphorylation at Thr-149 is required for its antiapoptotic effect by blocking death-inducing signaling complex death-inducing signaling complex (DISC) activity through the control of interaction with CASP8. Phosphorylation at Thr-149 results in translocation to mitochondria and this translocation enables the binding to CASP8. Dephosphorylated at Thr-149 by calcineurin; doesn't inhibit the association between FADD and CASP8 and the consequent apoptosis. Polyubiquitinated by MDM2; promoting proteasomal-dependent degradation in response to apoptotic stimuli.

Its subcellular location is the cytoplasm. The protein localises to the mitochondrion. The protein resides in the sarcoplasmic reticulum. It is found in the membrane. Its function is as follows. Apoptosis repressor that blocks multiple modes of cell death. Inhibits extrinsic apoptotic pathways through two different ways. Firstly by interacting with FAS and FADD upon FAS activation blocking death-inducing signaling complex (DISC) assembly. Secondly by interacting with CASP8 in a mitochondria localization- and phosphorylation-dependent manner, limiting the amount of soluble CASP8 available for DISC-mediated activation. Inhibits intrinsic apoptotic pathway in response to a wide range of stresses, through its interaction with BAX resulting in BAX inactivation, preventing mitochondrial dysfunction and release of pro-apoptotic factors. Inhibits calcium-mediated cell death by functioning as a cytosolic calcium buffer, dissociating its interaction with CASP8 and maintaining calcium homeostasis. Negatively regulates oxidative stress-induced apoptosis by phosphorylation-dependent suppression of the mitochondria-mediated intrinsic pathway, by blocking CASP2 activation and BAX translocation. Negatively regulates hypoxia-induced apoptosis in part by inhibiting the release of cytochrome c from mitochondria in a caspase-independent manner. Also inhibits TNF-induced necrosis by preventing TNF-signaling pathway through TNFRSF1A interaction abrogating the recruitment of RIPK1 to complex I. Finally through its role as apoptosis repressor, promotes vascular remodeling through inhibition of apoptosis and stimulation of proliferation, in response to hypoxia. Inhibits too myoblast differentiation through caspase inhibition. This Mus musculus (Mouse) protein is Nucleolar protein 3 (Nol3).